The primary structure comprises 397 residues: Elongation factor Tu (397 aa).

The 198-residue stretch at 10–207 folds into the tr-type G domain; that stretch reads LPHCNVGTIG…TLDSYIPQPE (198 aa). Residues 19-26 form a G1 region; the sequence is GHVDHGKT. 19–26 provides a ligand contact to GTP; it reads GHVDHGKT. Threonine 26 is a Mg(2+) binding site. The interval 60–64 is G2; sequence GITIN. The segment at 81–84 is G3; the sequence is DCPG. GTP-binding positions include 81-85 and 136-139; these read DCPGH and NKAD. Residues 136 to 139 are G4; it reads NKAD. Residues 174–176 are G5; it reads SAR.

It belongs to the TRAFAC class translation factor GTPase superfamily. Classic translation factor GTPase family. EF-Tu/EF-1A subfamily. Monomer.

The protein localises to the cytoplasm. It catalyses the reaction GTP + H2O = GDP + phosphate + H(+). Its function is as follows. GTP hydrolase that promotes the GTP-dependent binding of aminoacyl-tRNA to the A-site of ribosomes during protein biosynthesis. This Pseudomonas syringae pv. tomato (strain ATCC BAA-871 / DC3000) protein is Elongation factor Tu.